The chain runs to 235 residues: Sperm-associated microtubule inner protein 5 (235 aa).

In terms of assembly, microtubule inner protein component of sperm flagellar doublet microtubules. As to expression, expressed in sperm.

Its subcellular location is the cytoplasm. It localises to the cytoskeleton. The protein resides in the flagellum axoneme. It is found in the nucleus. Microtubule inner protein (MIP) part of the dynein-decorated doublet microtubules (DMTs) in flagellum axoneme. May serve to reinforce and thus stabilize the microtubule structure in the sperm flagella. The protein is Sperm-associated microtubule inner protein 5 (SPMIP5) of Bos taurus (Bovine).